The sequence spans 233 residues: MSEAKKLLAQGLWKNNSALVQLLGLCPLLAVSSTATNALGLGLATTLVLVCTNTAVSALRRWVPSEIRIPIYVMIIASVVSTVQMLINAYAFGLYQSLGIFIPLIVTNCIVIGRAEAYAAKNPVGLSALDGFAMGMGATCALFVLGALREILGNGTLFDGADMLLGSWATVLRIDILHLDTPFLLAMLPPGAFIGLGLLLAGKYVIDEKMKARKANTRVSVPQLQDGDAEKAL.

The next 6 membrane-spanning stretches (helical) occupy residues 18-38 (ALVQLLGLCPLLAVSSTATNA), 39-59 (LGLGLATTLVLVCTNTAVSAL), 69-89 (IPIYVMIIASVVSTVQMLINA), 92-112 (FGLYQSLGIFIPLIVTNCIVI), 128-148 (ALDGFAMGMGATCALFVLGAL), and 182-202 (PFLLAMLPPGAFIGLGLLLAG).

Belongs to the NqrDE/RnfAE family. In terms of assembly, the complex is composed of six subunits: RnfA, RnfB, RnfC, RnfD, RnfE and RnfG.

Its subcellular location is the cell inner membrane. Part of a membrane-bound complex that couples electron transfer with translocation of ions across the membrane. In Yersinia pseudotuberculosis serotype O:3 (strain YPIII), this protein is Ion-translocating oxidoreductase complex subunit E.